An 81-amino-acid chain; its full sequence is Small ribosomal subunit protein bS16 (81 aa).

Belongs to the bacterial ribosomal protein bS16 family.

The protein is Small ribosomal subunit protein bS16 of Treponema denticola (strain ATCC 35405 / DSM 14222 / CIP 103919 / JCM 8153 / KCTC 15104).